Consider the following 154-residue polypeptide: Catabolic 3-dehydroquinase (154 aa).

Tyr-25 serves as the catalytic Proton acceptor. Substrate-binding residues include Asn-79, His-85, and Asp-92. The active-site Proton donor is the His-105. Substrate contacts are provided by residues 106 to 107 (IS) and Arg-116.

Belongs to the type-II 3-dehydroquinase family. As to quaternary structure, homododecamer. Adopts a ring-like structure, composed of an arrangement of two hexameric rings stacked on top of one another.

It carries out the reaction 3-dehydroquinate = 3-dehydroshikimate + H2O. Its pathway is aromatic compound metabolism; 3,4-dihydroxybenzoate biosynthesis; 3,4-dihydroxybenzoate from 3-dehydroquinate: step 1/2. Is involved in the catabolism of quinate. Allows the utilization of quinate as carbon source via the beta-ketoadipate pathway. The polypeptide is Catabolic 3-dehydroquinase (Sclerotinia sclerotiorum (strain ATCC 18683 / 1980 / Ss-1) (White mold)).